Here is a 561-residue protein sequence, read N- to C-terminus: Potassium-transporting ATPase potassium-binding subunit (561 aa).

A run of 11 helical transmembrane segments spans residues 5 to 25 (LAAG…YVPL), 60 to 80 (CGYA…LYVL), 86 to 106 (VLPL…NTAV), 131 to 151 (GLAV…VALI), 177 to 197 (ILLP…VIQS), 247 to 267 (PTPL…VALT), 281 to 301 (LTVL…TTAA), 376 to 396 (GLYG…LLVG), 415 to 435 (ALAV…TVVL), 489 to 509 (LGLC…ALAG), and 531 to 551 (FAGL…FPVL).

Belongs to the KdpA family. In terms of assembly, the system is composed of three essential subunits: KdpA, KdpB and KdpC.

Its subcellular location is the cell membrane. Its function is as follows. Part of the high-affinity ATP-driven potassium transport (or Kdp) system, which catalyzes the hydrolysis of ATP coupled with the electrogenic transport of potassium into the cytoplasm. This subunit binds the extracellular potassium ions and delivers the ions to the membrane domain of KdpB through an intramembrane tunnel. This chain is Potassium-transporting ATPase potassium-binding subunit, found in Nocardia farcinica (strain IFM 10152).